The following is a 155-amino-acid chain: SsrA-binding protein (155 aa).

Basic and acidic residues predominate over residues 123-142 (DLHDKRETEKKRDWEREKGQ). The segment at 123-155 (DLHDKRETEKKRDWEREKGQLMRHKISSPRKDT) is disordered. Basic residues predominate over residues 143-155 (LMRHKISSPRKDT).

This sequence belongs to the SmpB family.

The protein localises to the cytoplasm. Functionally, required for rescue of stalled ribosomes mediated by trans-translation. Binds to transfer-messenger RNA (tmRNA), required for stable association of tmRNA with ribosomes. tmRNA and SmpB together mimic tRNA shape, replacing the anticodon stem-loop with SmpB. tmRNA is encoded by the ssrA gene; the 2 termini fold to resemble tRNA(Ala) and it encodes a 'tag peptide', a short internal open reading frame. During trans-translation Ala-aminoacylated tmRNA acts like a tRNA, entering the A-site of stalled ribosomes, displacing the stalled mRNA. The ribosome then switches to translate the ORF on the tmRNA; the nascent peptide is terminated with the 'tag peptide' encoded by the tmRNA and targeted for degradation. The ribosome is freed to recommence translation, which seems to be the essential function of trans-translation. This Methylibium petroleiphilum (strain ATCC BAA-1232 / LMG 22953 / PM1) protein is SsrA-binding protein.